A 670-amino-acid polypeptide reads, in one-letter code: Eukaryotic translation initiation factor 3 subunit B (670 aa).

One can recognise an RRM domain in the interval K30–D116. 4 WD repeats span residues S183–L221, F222–S269, L466–T507, and E509–V553. Residues K568–A600 adopt a coiled-coil conformation.

This sequence belongs to the eIF-3 subunit B family. Component of the eukaryotic translation initiation factor 3 (eIF-3) complex.

It is found in the cytoplasm. Functionally, RNA-binding component of the eukaryotic translation initiation factor 3 (eIF-3) complex, which is involved in protein synthesis of a specialized repertoire of mRNAs and, together with other initiation factors, stimulates binding of mRNA and methionyl-tRNAi to the 40S ribosome. The eIF-3 complex specifically targets and initiates translation of a subset of mRNAs involved in cell proliferation. In Dictyostelium discoideum (Social amoeba), this protein is Eukaryotic translation initiation factor 3 subunit B (eif3B).